The primary structure comprises 110 residues: Mitochondrial pyruvate carrier 1 (110 aa).

Transmembrane regions (helical) follow at residues 20–36 and 44–61; these read HFWG…AGLV and MISG…ALFM.

This sequence belongs to the mitochondrial pyruvate carrier (MPC) (TC 2.A.105) family.

It localises to the mitochondrion inner membrane. In terms of biological role, mediates the uptake of pyruvate into mitochondria. The polypeptide is Mitochondrial pyruvate carrier 1 (Arabidopsis thaliana (Mouse-ear cress)).